We begin with the raw amino-acid sequence, 216 residues long: Large ribosomal subunit protein uL3 (216 aa).

Residues 133–145 show a composition bias toward polar residues; the sequence is GRATHGNSRSHNV. Positions 133–153 are disordered; the sequence is GRATHGNSRSHNVPGSIGMAQ. Q153 carries the N5-methylglutamine modification.

The protein belongs to the universal ribosomal protein uL3 family. As to quaternary structure, part of the 50S ribosomal subunit. Forms a cluster with proteins L14 and L19. Post-translationally, methylated by PrmB.

Functionally, one of the primary rRNA binding proteins, it binds directly near the 3'-end of the 23S rRNA, where it nucleates assembly of the 50S subunit. This Burkholderia cenocepacia (strain ATCC BAA-245 / DSM 16553 / LMG 16656 / NCTC 13227 / J2315 / CF5610) (Burkholderia cepacia (strain J2315)) protein is Large ribosomal subunit protein uL3.